We begin with the raw amino-acid sequence, 214 residues long: Large ribosomal subunit protein uL4c (214 aa).

The disordered stretch occupies residues 42–81; it reads VKQSNEKRQGSANTKTRSEVRGGGRKPWRQKGTGRARAGS. Positions 64–75 are enriched in basic residues; the sequence is GGRKPWRQKGTG.

This sequence belongs to the universal ribosomal protein uL4 family. As to quaternary structure, part of the 50S ribosomal subunit.

It is found in the plastid. The protein localises to the chloroplast. In terms of biological role, probably binds the 23S rRNA. This is Large ribosomal subunit protein uL4c (rpl4) from Pyropia yezoensis (Susabi-nori).